The sequence spans 504 residues: Multicopper oxidase MmcO (504 aa).

A signal peptide (tat-type signal) is located at residues 1-44 (MPELATSGNAFDKRRFSRRGFLGAGIASGFALAACASKPTASGA). Residues H120, H122, H161, and H163 each coordinate Cu cation. The region spanning 190-349 (EWIIILDDWT…NALARALLST (160 aa)) is the Plastocyanin-like domain. Residues H437, H440, H442, H485, C486, H487, and H491 each contribute to the Cu cation site.

Belongs to the multicopper oxidase family. Cu cation serves as cofactor. Predicted to be exported by the Tat system. The position of the signal peptide cleavage has not been experimentally proven.

The protein resides in the cell inner membrane. It localises to the periplasm. It carries out the reaction 4 Fe(2+) + O2 + 4 H(+) = 4 Fe(3+) + 2 H2O. In terms of biological role, required for copper resistance. In vitro, oxidizes organic substrates and Fe(2+). May act in vivo by oxidation of toxic periplasmic Cu(+). This chain is Multicopper oxidase MmcO, found in Mycobacterium tuberculosis (strain ATCC 25618 / H37Rv).